Reading from the N-terminus, the 764-residue chain is Irregular chiasm C-roughest protein (764 aa).

Positions 1 to 19 (MLHTMQLLLLATIVGMVRS) are cleaved as a signal peptide. Residues 20–533 (SPYTSYQNQR…QAKKSVSLLM (514 aa)) lie on the Extracellular side of the membrane. Ig-like C2-type domains follow at residues 21–120 (PYTS…PAIR), 132–230 (PEAP…AKIR), 237–343 (PKVK…LDIS), 346–419 (PSFR…AEIS), and 430–530 (PAIG…KSVS). 5 disulfide bridges follow: Cys49/Cys107, Cys155/Cys214, Cys281/Cys325, Cys367/Cys408, and Cys450/Cys508. N-linked (GlcNAc...) asparagine glycosylation is found at Asn211, Asn313, Asn393, Asn400, and Asn507. A helical membrane pass occupies residues 534–556 (TIVGGISVVAFLLVLTILVVVYI). Residues 557–764 (KCKKRTKLPP…SSLLPPPTAV (208 aa)) lie on the Cytoplasmic side of the membrane. Disordered stretches follow at residues 640 to 660 (HQNQLQLQQQQQQSHHQHHTQ) and 691 to 719 (NGLPSLQSTTASVVSSSPNGSCSNQSTTA). The span at 692-701 (GLPSLQSTTA) shows a compositional bias: polar residues. The segment covering 702 to 719 (SVVSSSPNGSCSNQSTTA) has biased composition (low complexity).

As to expression, postembryonic expression is strong in the developing optic lobe and in the eye imaginal disk.

The protein localises to the membrane. Its function is as follows. Required for correct axonal pathway formation in the optic lobe and for programmed cell death in the developing retina. This chain is Irregular chiasm C-roughest protein (rst), found in Drosophila melanogaster (Fruit fly).